Reading from the N-terminus, the 85-residue chain is MSAKGQMLQDPFLNILRKEHVPVSIYLVNGIKLQGQIESFDQYVVLLKNTVTQMVYKHAISTVVPARPVQVPHEHPAPAAGTAEI.

Residues 10–69 (DPFLNILRKEHVPVSIYLVNGIKLQGQIESFDQYVVLLKNTVTQMVYKHAISTVVPARPV) form the Sm domain.

The protein belongs to the Hfq family. Homohexamer.

RNA chaperone that binds small regulatory RNA (sRNAs) and mRNAs to facilitate mRNA translational regulation in response to envelope stress, environmental stress and changes in metabolite concentrations. Also binds with high specificity to tRNAs. The protein is RNA-binding protein Hfq of Laribacter hongkongensis (strain HLHK9).